Consider the following 256-residue polypeptide: Type III pantothenate kinase (256 aa).

Asp7 to Lys14 is an ATP binding site. Substrate contacts are provided by residues Tyr96 and Gly103–Arg106. The active-site Proton acceptor is Asp105. Thr133 serves as a coordination point for ATP. Substrate is bound at residue Thr183.

This sequence belongs to the type III pantothenate kinase family. Homodimer. NH4(+) is required as a cofactor. The cofactor is K(+).

It is found in the cytoplasm. It catalyses the reaction (R)-pantothenate + ATP = (R)-4'-phosphopantothenate + ADP + H(+). It functions in the pathway cofactor biosynthesis; coenzyme A biosynthesis; CoA from (R)-pantothenate: step 1/5. In terms of biological role, catalyzes the phosphorylation of pantothenate (Pan), the first step in CoA biosynthesis. This is Type III pantothenate kinase from Verminephrobacter eiseniae (strain EF01-2).